The chain runs to 71 residues: Conotoxin De13.1 (71 aa).

A signal peptide spans 1–19 (MSGMGVLLLVLLLVMPLAA). Residues 20–35 (FHQDGEGEATRRSGGL) constitute a propeptide that is removed on maturation. 4-hydroxyproline is present on residues Pro-40 and Pro-44. A 6'-bromotryptophan modification is found at Trp-51. The residue at position 52 (Glu-52) is a 4-carboxyglutamate. Lys-55 is subject to 5-hydroxylysine. 4-hydroxyproline is present on Pro-58. His-69 is modified (histidine amide).

This sequence belongs to the conotoxin G superfamily. Post-translationally, contains 4 disulfide bonds. Expressed by the venom duct.

It is found in the secreted. This chain is Conotoxin De13.1, found in Conasprella delessertii (Sozon's cone).